The following is a 511-amino-acid chain: Histidine ammonia-lyase 2 (511 aa).

A cross-link (5-imidazolinone (Ser-Gly)) is located at residues 144–146 (SSG). Serine 145 carries the 2,3-didehydroalanine (Ser) modification.

The protein belongs to the PAL/histidase family. In terms of processing, contains an active site 4-methylidene-imidazol-5-one (MIO), which is formed autocatalytically by cyclization and dehydration of residues Ser-Ser-Gly.

Its subcellular location is the cytoplasm. It catalyses the reaction L-histidine = trans-urocanate + NH4(+). It functions in the pathway amino-acid degradation; L-histidine degradation into L-glutamate; N-formimidoyl-L-glutamate from L-histidine: step 1/3. This chain is Histidine ammonia-lyase 2 (hutH2), found in Fusobacterium nucleatum subsp. nucleatum (strain ATCC 25586 / DSM 15643 / BCRC 10681 / CIP 101130 / JCM 8532 / KCTC 2640 / LMG 13131 / VPI 4355).